Consider the following 269-residue polypeptide: uncharacterized protein (269 aa).

The segment at residues 3 to 105 (WIINDNIEFW…VPRRGFKIHN (103 aa)) is a DNA-binding region (ompR/PhoB-type).

The protein to V.cholerae cholera toxin transcriptional activator (ToxR).

This is an uncharacterized protein from Escherichia coli (strain K12).